The following is a 92-amino-acid chain: Small ribosomal subunit protein uS19 (92 aa).

The protein belongs to the universal ribosomal protein uS19 family.

Its function is as follows. Protein S19 forms a complex with S13 that binds strongly to the 16S ribosomal RNA. This Paracidovorax citrulli (strain AAC00-1) (Acidovorax citrulli) protein is Small ribosomal subunit protein uS19.